We begin with the raw amino-acid sequence, 169 residues long: Disulfide bond formation protein B (169 aa).

At 1 to 14 (MMRFLNHCSQGRSA) the chain is on the cytoplasmic side. A helical transmembrane segment spans residues 15–31 (WLLMILTALILESSALY). The Periplasmic segment spans residues 32-49 (FQHVMKLQPCVMCIYERV). Cys-41 and Cys-44 are joined by a disulfide. A helical membrane pass occupies residues 50–65 (ALFGVLSAGILGVIAP). Topologically, residues 66 to 71 (KTPLRW) are cytoplasmic. The helical transmembrane segment at 72–89 (LAIILWIYSAWGGLQLAW) threads the bilayer. At 90-144 (QHTMMQLHPSPFNTCDFFVNFPSWLALNQWLPSVFEATGDCSVRQWQFLTLEMPQ) the chain is on the periplasmic side. A disulfide bridge connects residues Cys-104 and Cys-130. A helical membrane pass occupies residues 145–163 (WLVGIFAAYLVVAALVLIS). Over 164–169 (QFFSRK) the chain is Cytoplasmic.

The protein belongs to the DsbB family.

It localises to the cell inner membrane. In terms of biological role, required for disulfide bond formation in some periplasmic proteins. Acts by oxidizing the DsbA protein. The protein is Disulfide bond formation protein B of Photorhabdus laumondii subsp. laumondii (strain DSM 15139 / CIP 105565 / TT01) (Photorhabdus luminescens subsp. laumondii).